The sequence spans 86 residues: Small ribosomal subunit protein uS17 (86 aa).

This sequence belongs to the universal ribosomal protein uS17 family. In terms of assembly, part of the 30S ribosomal subunit.

Functionally, one of the primary rRNA binding proteins, it binds specifically to the 5'-end of 16S ribosomal RNA. In Nitrosococcus oceani (strain ATCC 19707 / BCRC 17464 / JCM 30415 / NCIMB 11848 / C-107), this protein is Small ribosomal subunit protein uS17.